A 108-amino-acid chain; its full sequence is uncharacterized protein (108 aa).

A helical transmembrane segment spans residues 59 to 81 (NIVIILWKIMVVIISSIIHRTYI).

It localises to the membrane. This is an uncharacterized protein from Rickettsia conorii (strain ATCC VR-613 / Malish 7).